The primary structure comprises 95 residues: Putative pterin-4-alpha-carbinolamine dehydratase (95 aa).

The protein belongs to the pterin-4-alpha-carbinolamine dehydratase family.

The catalysed reaction is (4aS,6R)-4a-hydroxy-L-erythro-5,6,7,8-tetrahydrobiopterin = (6R)-L-erythro-6,7-dihydrobiopterin + H2O. The protein is Putative pterin-4-alpha-carbinolamine dehydratase of Nocardia farcinica (strain IFM 10152).